The chain runs to 761 residues: Hyperosmolality-gated Ca2+ permeable channel 1.6 (761 aa).

A run of 10 helical transmembrane segments spans residues 7–27, 101–121, 156–176, 375–395, 419–439, 467–487, 512–532, 583–603, 630–650, and 653–673; these read IGVAAAINIVTAFAFLLAFAI, IYLLGLKIFFPIACVAFTTMV, PRFWVHLCMAYAITFWTCFIL, LIVGVAYFFLTFFFMIPIAFV, LLKSIIQGFLPGIALKIFLLF, FYMFQFINVFLGSIVTGTAFQ, ATFFITYIMVDGWAGVAGEIL, AAVSPILLPFILVFFGLAFVV, VVTALVVSQLLLMGLLSTKHA, and STPLLLVLPLLTIGFHKHCKN. Residues 718 to 731 show a composition bias toward basic and acidic residues; that stretch reads RVGEDPEPEEKLES. The tract at residues 718–761 is disordered; it reads RVGEDPEPEEKLESDMSPPDLVATKRWSWRNTPLPSKDSCREIP.

It belongs to the CSC1 (TC 1.A.17) family.

The protein resides in the membrane. Functionally, acts as an osmosensitive calcium-permeable cation channel. This chain is Hyperosmolality-gated Ca2+ permeable channel 1.6, found in Arabidopsis thaliana (Mouse-ear cress).